The primary structure comprises 1048 residues: Nonsense-mediated mRNA decay protein 5 (1048 aa).

The region spanning 24 to 104 (AETHLKNASK…KDMLIKTMVS (81 aa)) is the Importin N-terminal domain. Position 977 is a phosphoserine (Ser-977).

In terms of assembly, GTP-bound Ran dissociates the isolated NMD5/TFIIS complex.

It is found in the nucleus. The protein resides in the cytoplasm. Active in protein import into the nucleus. Its major import substrate is transcription elongation factor TFIIS. This chain is Nonsense-mediated mRNA decay protein 5 (NMD5), found in Saccharomyces cerevisiae (strain ATCC 204508 / S288c) (Baker's yeast).